The following is a 270-amino-acid chain: Putative pyruvate, phosphate dikinase regulatory protein (270 aa).

151 to 158 lines the ADP pocket; the sequence is GVSRTSKT.

Belongs to the pyruvate, phosphate/water dikinase regulatory protein family. PDRP subfamily.

It catalyses the reaction N(tele)-phospho-L-histidyl/L-threonyl-[pyruvate, phosphate dikinase] + ADP = N(tele)-phospho-L-histidyl/O-phospho-L-threonyl-[pyruvate, phosphate dikinase] + AMP + H(+). The enzyme catalyses N(tele)-phospho-L-histidyl/O-phospho-L-threonyl-[pyruvate, phosphate dikinase] + phosphate + H(+) = N(tele)-phospho-L-histidyl/L-threonyl-[pyruvate, phosphate dikinase] + diphosphate. Functionally, bifunctional serine/threonine kinase and phosphorylase involved in the regulation of the pyruvate, phosphate dikinase (PPDK) by catalyzing its phosphorylation/dephosphorylation. This Bacillus velezensis (strain DSM 23117 / BGSC 10A6 / LMG 26770 / FZB42) (Bacillus amyloliquefaciens subsp. plantarum) protein is Putative pyruvate, phosphate dikinase regulatory protein.